The primary structure comprises 634 residues: MGKVVGIDLGTTNSCVAVMEGGKPTVIANAEGFRTTPSVVAYTKNQDQLVGQIAKRQAVMNPENTFYSAKRFVGRRVDEVNEESKDVSYGIEKAGSNVKLKCPVLDKQFSPEEVSAQVLRKLSEDAGKYLGENITQAVITVPAYFNDSQRQATKDAGKIAGLEVLRIINEPTAAALAYGLDKKSNERILVFDLGGGTFDVSVLEVGDGVFEVLSTSGDTHLGGDDFDRCIVNHLASVFKSNEGIDLREDKQALQRLTEAAEKAKIELSNATQSEINLPFITATPDGPKHLDLNLTRANFEELASKLIDRCRVPVEQALKDAKLSTGEIDEIVMVGGSTRMPAVQELVKRVTGKDPNQTVNPDEVVAVGAAIQGGVLAGEVKDILLLDVTPLSLGVETLGGVMTKMITRNTTVPTKKSETYSTAVDGQTNVEIHVLQGEREMASDNKSLGTFRLDGIPSAPRGVPQIEVTFDIDANGILSVTAKDKGSGKEQSISITGASTLSDNEVDKMVKDAESNASVDKEKREKIDLKNQAETLVYQTEKQLGELGDKVDDSAKAKVEEKSKALKEATSKEDYDSMKKLLEELQQELYAIGSSVYQQPGNQPPAPGGPNANASDDKGPDDDVIDADFTETKD.

Threonine 197 is subject to Phosphothreonine; by autocatalysis. The interval 592–634 (IGSSVYQQPGNQPPAPGGPNANASDDKGPDDDVIDADFTETKD) is disordered. Residues 619-634 (GPDDDVIDADFTETKD) show a composition bias toward acidic residues.

The protein belongs to the heat shock protein 70 family.

In terms of biological role, acts as a chaperone. The sequence is that of Chaperone protein DnaK from Prochlorococcus marinus (strain MIT 9515).